We begin with the raw amino-acid sequence, 395 residues long: NAD(P)H-quinone oxidoreductase subunit H, chloroplastic (395 aa).

This sequence belongs to the complex I 49 kDa subunit family. As to quaternary structure, NDH is composed of at least 16 different subunits, 5 of which are encoded in the nucleus.

It is found in the plastid. The protein resides in the chloroplast thylakoid membrane. The catalysed reaction is a plastoquinone + NADH + (n+1) H(+)(in) = a plastoquinol + NAD(+) + n H(+)(out). It catalyses the reaction a plastoquinone + NADPH + (n+1) H(+)(in) = a plastoquinol + NADP(+) + n H(+)(out). Its function is as follows. NDH shuttles electrons from NAD(P)H:plastoquinone, via FMN and iron-sulfur (Fe-S) centers, to quinones in the photosynthetic chain and possibly in a chloroplast respiratory chain. The immediate electron acceptor for the enzyme in this species is believed to be plastoquinone. Couples the redox reaction to proton translocation, and thus conserves the redox energy in a proton gradient. The polypeptide is NAD(P)H-quinone oxidoreductase subunit H, chloroplastic (Coffea arabica (Arabian coffee)).